A 269-amino-acid chain; its full sequence is NAD kinase (269 aa).

The Proton acceptor role is filled by aspartate 45. Residues 45–46, 121–122, arginine 147, aspartate 149, 160–165, and alanine 184 each bind NAD(+); these read DG, NE, and TAYNRS.

It belongs to the NAD kinase family. A divalent metal cation serves as cofactor.

It localises to the cytoplasm. The enzyme catalyses NAD(+) + ATP = ADP + NADP(+) + H(+). Involved in the regulation of the intracellular balance of NAD and NADP, and is a key enzyme in the biosynthesis of NADP. Catalyzes specifically the phosphorylation on 2'-hydroxyl of the adenosine moiety of NAD to yield NADP. The polypeptide is NAD kinase (Pediococcus pentosaceus (strain ATCC 25745 / CCUG 21536 / LMG 10740 / 183-1w)).